A 227-amino-acid polypeptide reads, in one-letter code: MEALKKIAGVTAAQYVTDGMTIGLGTGSTAYYFVEEIGRRVKQEGLQVVGVTTSSVTSKQAEVLGIPLKSIDDIDSIDLTVDGADEVDKNFNGIKGGGAALLMEKIVATPTKEYIWVVDASKMVEHLGAFKLPVEVVQYGADRLFRVFEKAGYKPSFRMKGDSRLVTDMQNYIIDLDLGCIKDPVAFGHLLDGTVGVVEHGLFNGMVDKVIVASKDGVTVLEAPTAG.

Substrate-binding positions include 26 to 29 (TGST), 82 to 85 (DGAD), and 95 to 98 (KGGG). Catalysis depends on E104, which acts as the Proton acceptor. K122 lines the substrate pocket.

Belongs to the ribose 5-phosphate isomerase family. In terms of assembly, homodimer.

It carries out the reaction aldehydo-D-ribose 5-phosphate = D-ribulose 5-phosphate. Its pathway is carbohydrate degradation; pentose phosphate pathway; D-ribose 5-phosphate from D-ribulose 5-phosphate (non-oxidative stage): step 1/1. Functionally, catalyzes the reversible conversion of ribose-5-phosphate to ribulose 5-phosphate. The sequence is that of Ribose-5-phosphate isomerase A from Streptococcus pyogenes serotype M1.